The sequence spans 202 residues: Large ribosomal subunit protein bL9 (202 aa).

The tract at residues 177 to 202 is disordered; it reads AGEFFDPEAEPDDVAEAGGEQTAEEK. Acidic residues predominate over residues 181–191; the sequence is FDPEAEPDDVA.

Belongs to the bacterial ribosomal protein bL9 family.

Its function is as follows. Binds to the 23S rRNA. This chain is Large ribosomal subunit protein bL9, found in Nitrobacter hamburgensis (strain DSM 10229 / NCIMB 13809 / X14).